The chain runs to 30 residues: Pyrrole-2-carboxylate oxygenase (30 aa).

Homotrimer. It depends on FAD as a cofactor.

The enzyme catalyses pyrrole-2-carboxylate + NADH + O2 + H(+) = 5-hydroxypyrrole-2-carboxylate + NAD(+) + H2O. Its function is as follows. Monooxygenase that initiates the degradation of pyrrole-2-carboxylate, which allows Arthrobacter sp. strain Py1 to grow on pyrrole-2-carboxylate as sole carbon, nitrogen, and energy source. To a lesser extent, can also use pyrrole, pyrrole-2-aldehyde, and indole-2-carboxylate as substrate. This chain is Pyrrole-2-carboxylate oxygenase, found in Arthrobacter sp. (strain Py1).